The primary structure comprises 221 residues: MGEKSRRKGPAPRHADGKLGRTCDHPYAPWSFTPSSRAPTAWVRPPCPVWASRLQEHSPEPRRARAPPTRRAQAALYAPALRLRDHLDRFSILMTSCTSWLQAPQAPGLCRDEQSSRISVPQLSGAPILLPDLEGTKLSNFQESSPLPHKHERKDKRSTPEEEGRSAPEKIIQSLKLCPGGHRPASLSSGCPAGCRLSFNLPPSMLLSVQKCCMPSSLKTC.

Basic residues predominate over residues 1–11 (MGEKSRRKGPA). 2 disordered regions span residues 1 to 23 (MGEKSRRKGPAPRHADGKLGRTC) and 139 to 169 (SNFQESSPLPHKHERKDKRSTPEEEGRSAPE). Basic and acidic residues-rich tracts occupy residues 13–23 (RHADGKLGRTC) and 155–168 (DKRSTPEEEGRSAP).

This is an uncharacterized protein from Homo sapiens (Human).